A 254-amino-acid chain; its full sequence is 3-deoxy-manno-octulosonate cytidylyltransferase (254 aa).

It belongs to the KdsB family.

It localises to the cytoplasm. It catalyses the reaction 3-deoxy-alpha-D-manno-oct-2-ulosonate + CTP = CMP-3-deoxy-beta-D-manno-octulosonate + diphosphate. It functions in the pathway nucleotide-sugar biosynthesis; CMP-3-deoxy-D-manno-octulosonate biosynthesis; CMP-3-deoxy-D-manno-octulosonate from 3-deoxy-D-manno-octulosonate and CTP: step 1/1. Its pathway is bacterial outer membrane biogenesis; lipopolysaccharide biosynthesis. Functionally, activates KDO (a required 8-carbon sugar) for incorporation into bacterial lipopolysaccharide in Gram-negative bacteria. This chain is 3-deoxy-manno-octulosonate cytidylyltransferase, found in Bordetella parapertussis (strain 12822 / ATCC BAA-587 / NCTC 13253).